We begin with the raw amino-acid sequence, 345 residues long: Phosphoribosylformylglycinamidine cyclo-ligase (345 aa).

The protein belongs to the AIR synthase family.

It localises to the cytoplasm. It carries out the reaction 2-formamido-N(1)-(5-O-phospho-beta-D-ribosyl)acetamidine + ATP = 5-amino-1-(5-phospho-beta-D-ribosyl)imidazole + ADP + phosphate + H(+). It functions in the pathway purine metabolism; IMP biosynthesis via de novo pathway; 5-amino-1-(5-phospho-D-ribosyl)imidazole from N(2)-formyl-N(1)-(5-phospho-D-ribosyl)glycinamide: step 2/2. The sequence is that of Phosphoribosylformylglycinamidine cyclo-ligase from Lactobacillus acidophilus (strain ATCC 700396 / NCK56 / N2 / NCFM).